The chain runs to 589 residues: V-type ATP synthase alpha chain 1 (589 aa).

Glycine 239 to threonine 246 provides a ligand contact to ATP.

Belongs to the ATPase alpha/beta chains family.

The enzyme catalyses ATP + H2O + 4 H(+)(in) = ADP + phosphate + 5 H(+)(out). In terms of biological role, produces ATP from ADP in the presence of a proton gradient across the membrane. The V-type alpha chain is a catalytic subunit. The protein is V-type ATP synthase alpha chain 1 (atpA1) of Treponema pallidum (strain Nichols).